We begin with the raw amino-acid sequence, 312 residues long: MSDVLLNFIAGGVGGSCTVIVGHPFDTVKVRIQTMPMPKPGEKPQFTGALDCVKRTVSKEGFFALYKGMAAPLVGVSPLFAVFFGGCAVGKWLQQTDPSQEMTFIQNANAGALAGVFTTIVMVPGERIKCLLQVQQAGSAGSGVHYDGPLDVVKKLYKQGGISSIYRGTGATLLRDIPASAAYLSVYEYLKKKFSGEGAQRTLSPGATLMAGGLAGIANWGVCIPADVLKSRLQTAPEGKYPDGIRGVLREVLREEGPRALFKGFWPVMLRAFPANAACFFGLELTLAAFRYFGIGGHPTPSTEVVPLPHDE.

Solcar repeat units lie at residues 2 to 93, 102 to 193, and 203 to 289; these read SDVL…GKWL, MTFI…LKKK, and LSPG…TLAA. Transmembrane regions (helical) follow at residues 5–25, 69–89, 104–124, 172–192, 209–229, and 261–282; these read LLNFIAGGVGGSCTVIVGHPF, MAAPLVGVSPLFAVFFGGCAV, FIQNANAGALAGVFTTIVMVP, TLLRDIPASAAYLSVYEYLKK, LMAGGLAGIANWGVCIPADVL, and LFKGFWPVMLRAFPANAACFFG.

This sequence belongs to the mitochondrial carrier (TC 2.A.29) family.

The protein localises to the mitochondrion inner membrane. Seems to play a role in the maintenance of tissue differentiation in the developing embryo, but not for its initiation. This Caenorhabditis elegans protein is Protein dif-1 (dif-1).